Consider the following 689-residue polypeptide: DNA-directed RNA polymerase subunit beta' (689 aa).

Positions 76, 78, 94, and 97 each coordinate Zn(2+). Positions 496, 498, and 500 each coordinate Mg(2+).

This sequence belongs to the RNA polymerase beta' chain family. RpoC1 subfamily. In plastids the minimal PEP RNA polymerase catalytic core is composed of four subunits: alpha, beta, beta', and beta''. When a (nuclear-encoded) sigma factor is associated with the core the holoenzyme is formed, which can initiate transcription. The cofactor is Mg(2+). It depends on Zn(2+) as a cofactor.

It is found in the plastid. The protein resides in the chloroplast. It carries out the reaction RNA(n) + a ribonucleoside 5'-triphosphate = RNA(n+1) + diphosphate. Its function is as follows. DNA-dependent RNA polymerase catalyzes the transcription of DNA into RNA using the four ribonucleoside triphosphates as substrates. The polypeptide is DNA-directed RNA polymerase subunit beta' (Illicium oligandrum (Star anise)).